A 451-amino-acid polypeptide reads, in one-letter code: Trimethylamine monooxygenase (451 aa).

6 residues coordinate FAD: serine 12, glutamate 37, glutamine 39, leucine 45, tryptophan 46, and histidine 62. Positions 70 and 72 each coordinate NADP(+). The FAD site is built by asparagine 72 and valine 125. The NADP(+) site is built by serine 204, serine 205, serine 207, and arginine 228. The FAD site is built by glutamine 317 and threonine 320. Arginine 411 lines the NADP(+) pocket.

It belongs to the FMO family. It depends on FAD as a cofactor.

It catalyses the reaction trimethylamine + NADPH + O2 = trimethylamine N-oxide + NADP(+) + H2O. In terms of biological role, catalyzes the oxidation of trimethylamine (TMA) to produce trimethylamine N-oxide (TMAO). In vitro, has a broad substrate specificity, oxidizing many nitrogen- and sulfur-containing compounds, including dimethylamine (DMA), dimethylsulfide (DMS), dimethylsulfoxide (DMSO), cysteamine, methimazole and dimethylaniline. This chain is Trimethylamine monooxygenase, found in Methylocella silvestris (strain DSM 15510 / CIP 108128 / LMG 27833 / NCIMB 13906 / BL2).